Here is a 152-residue protein sequence, read N- to C-terminus: Transcriptional regulator MraZ (152 aa).

2 consecutive SpoVT-AbrB domains span residues 7-51 and 89-132; these read KERH…APDR and LEMV…DPQR.

Belongs to the MraZ family. As to quaternary structure, forms oligomers.

Its subcellular location is the cytoplasm. The protein resides in the nucleoid. The protein is Transcriptional regulator MraZ of Pelodictyon phaeoclathratiforme (strain DSM 5477 / BU-1).